The following is a 1112-amino-acid chain: Electrogenic sodium bicarbonate cotransporter 4 (1112 aa).

Basic and acidic residues predominate over residues 1–13 (MKVEEKAGVKKLE). Disordered stretches follow at residues 1–80 (MKVE…SSLG), 220–255 (KKPI…HHST), and 439–469 (GRSG…NEAE). Topologically, residues 1–513 (MKVEEKAGVK…DFYDGFHIQS (513 aa)) are cytoplasmic. Polar residues-rich tracts occupy residues 53-67 (QRVQ…SQQD) and 233-244 (SVSTTNRSSARS). The segment covering 444 to 465 (SAGGGGSGGGAGGSGAGGGGSG) has biased composition (gly residues). The helical transmembrane segment at 514 to 536 (ISAVLFIYLGCITNAITFGGLLG) threads the bilayer. Residues 537–547 (DATDNYQGVME) lie on the Extracellular side of the membrane. Residues 548-579 (SFLGTAMAGSLFCLFSGQPLIILSSTGPILIF) traverse the membrane as a helical segment. Over 580–598 (EKLLFDFSKANGLDYMEFR) the chain is Cytoplasmic. A helical transmembrane segment spans residues 599–620 (LWIGLHSAIQCLILVATDASFI). Residues 621–734 (IKYITRFTEE…LGSSCQFVPD (114 aa)) are Extracellular-facing. A helical transmembrane segment spans residues 735-753 (LALMSFILFFGTYSMTLTL). The Cytoplasmic segment spans residues 754 to 772 (KKFKFSRYFPTKVRTLVAD). Residues 773 to 792 (FSIVFSILLFCGIDACFGLQ) form a helical membrane-spanning segment. Residues 793–820 (TPKLHVPNVIKPTRPDRGWFVAPFGKNP) lie on the Extracellular side of the membrane. Residues 821-839 (WWVYPASILPALLVTILIF) traverse the membrane as a helical segment. Residues 840–858 (MDQQITAVIVNRKENKLRK) lie on the Cytoplasmic side of the membrane. The chain crosses the membrane as a helical span at residues 859–875 (AAGYHLDLFWVGILMAL). The Extracellular segment spans residues 876-880 (CSFMG). Residues 881–900 (LPWYVAATVISIAHIDSLKM) form a helical membrane-spanning segment. At 901–920 (ETETSAPGEQPQFLGVREQR) the chain is on the cytoplasmic side. The helical transmembrane segment at 921 to 940 (VTGVMVFILTGISVFLAPIL) threads the bilayer. The Extracellular segment spans residues 941 to 945 (KYIPM). The chain crosses the membrane as a helical span at residues 946 to 966 (PVLYGVFLYMGVASLNGIQFW). The Cytoplasmic segment spans residues 967–992 (DRCKLFLMPAKHQPDHAFLRHVPLRR). A helical transmembrane segment spans residues 993-1010 (IHLFTLVQILCLALLWIL). Residues 1011 to 1015 (KSTMA) lie on the Extracellular side of the membrane. Residues 1016 to 1033 (AIIFPVMILGLIIVRRLL) traverse the membrane as a helical segment. The Cytoplasmic portion of the chain corresponds to 1034 to 1112 (DLIFSQHDLA…KRSSSWSHSL (79 aa)). Residues 1055–1074 (KESDRKKRRKEVHENTDKEP) show a composition bias toward basic and acidic residues. A disordered region spans residues 1055–1112 (KESDRKKRRKEVHENTDKEPQFLPPSVVKIPMEGIPSDPQNGIHCVGRKRSSSWSHSL).

The protein belongs to the anion exchanger (TC 2.A.31) family. In terms of tissue distribution, observed in hepatocytes and in the apical region of bile duct intrahepatic cholangiocytes of liver. Also observed in uroepithelium cells lining the outer pelvic wall of the kidney (at protein level). Highly expressed in colon, distal colon, liver, kidney and testis. Moderate expression in duodenum and stomach and weak expression in heart. In kidney, very weakly expressed in the inner medulla, but abundantly expressed in cortex and outer medulla in the medullary thick ascending and cortical thick ascending limbs of the loop of Henle.

The protein resides in the basolateral cell membrane. It localises to the apical cell membrane. It catalyses the reaction 2 hydrogencarbonate(out) + Na(+)(out) = 2 hydrogencarbonate(in) + Na(+)(in). It carries out the reaction 3 hydrogencarbonate(out) + Na(+)(out) = 3 hydrogencarbonate(in) + Na(+)(in). In terms of biological role, mediates sodium- and bicarbonate-dependent electrogenic sodium bicarbonate cotransport, with a Na(+):HCO3(-) stoichiometry varying from 1:2 to 1:3. The sequence is that of Electrogenic sodium bicarbonate cotransporter 4 from Rattus norvegicus (Rat).